The chain runs to 422 residues: Dihydrolipoyllysine-residue succinyltransferase component of 2-oxoglutarate dehydrogenase complex (422 aa).

One can recognise a Lipoyl-binding domain in the interval 1-76; that stretch reads MPEVKVPELA…EVGQAIAVIG (76 aa). Lys42 carries the N6-lipoyllysine modification. Residues 77–184 are disordered; sequence EGSGNASKEN…APAKEEKKYN (108 aa). 2 stretches are compositionally biased toward polar residues: residues 80 to 94 and 114 to 130; these read GNAS…TPQQ and EVNQ…NATP. Residues 127–163 form the Peripheral subunit-binding (PSBD) domain; it reads NATPSARRYARENGVNLAEVSPKTNDVVRKEDIDKKQ. The segment covering 152 to 163 has biased composition (basic and acidic residues); it reads DVVRKEDIDKKQ. Positions 164 to 176 are enriched in low complexity; it reads QAPASTQTTQQAP. Residues His393 and Asp397 contribute to the active site.

It belongs to the 2-oxoacid dehydrogenase family. As to quaternary structure, forms a 24-polypeptide structural core with octahedral symmetry. Part of the 2-oxoglutarate dehydrogenase (OGDH) complex composed of E1 (2-oxoglutarate dehydrogenase), E2 (dihydrolipoamide succinyltransferase) and E3 (dihydrolipoamide dehydrogenase); the complex contains multiple copies of the three enzymatic components (E1, E2 and E3). It depends on (R)-lipoate as a cofactor.

It catalyses the reaction N(6)-[(R)-dihydrolipoyl]-L-lysyl-[protein] + succinyl-CoA = N(6)-[(R)-S(8)-succinyldihydrolipoyl]-L-lysyl-[protein] + CoA. The protein operates within amino-acid degradation; L-lysine degradation via saccharopine pathway; glutaryl-CoA from L-lysine: step 6/6. Functionally, E2 component of the 2-oxoglutarate dehydrogenase (OGDH) complex which catalyzes the second step in the conversion of 2-oxoglutarate to succinyl-CoA and CO(2). This is Dihydrolipoyllysine-residue succinyltransferase component of 2-oxoglutarate dehydrogenase complex (odhB) from Staphylococcus aureus (strain bovine RF122 / ET3-1).